We begin with the raw amino-acid sequence, 1388 residues long: DNA-directed RNA polymerase subunit beta' (1388 aa).

Zn(2+) contacts are provided by Cys65, Cys67, Cys80, and Cys83. Mg(2+) is bound by residues Asp456, Asp458, and Asp460. The Zn(2+) site is built by Cys812, Cys887, Cys894, and Cys897.

It belongs to the RNA polymerase beta' chain family. The RNAP catalytic core consists of 2 alpha, 1 beta, 1 beta' and 1 omega subunit. When a sigma factor is associated with the core the holoenzyme is formed, which can initiate transcription. It depends on Mg(2+) as a cofactor. Requires Zn(2+) as cofactor.

The catalysed reaction is RNA(n) + a ribonucleoside 5'-triphosphate = RNA(n+1) + diphosphate. DNA-dependent RNA polymerase catalyzes the transcription of DNA into RNA using the four ribonucleoside triphosphates as substrates. The sequence is that of DNA-directed RNA polymerase subunit beta' from Protochlamydia amoebophila (strain UWE25).